We begin with the raw amino-acid sequence, 201 residues long: Protein ripply1 (201 aa).

A disordered region spans residues 1-29 (MDPAASPAAAPPAAPAAAPAADPAADPAA). Over residues 15-29 (PAAAPAADPAADPAA) the composition is skewed to low complexity. The short motif at 57–60 (AYLW) is the WRPW motif element. Residues 99–134 (HPVRLYWPKSHSFDYLYSAGEILLNNFPVQATINLY) are ripply homology domain. Acidic residues predominate over residues 136 to 174 (DSDSADNEEDKEEEEEEEEEEDDEEEEEDEDKDVNENEP). The segment at 136–201 (DSDSADNEED…SPDPHSACPN (66 aa)) is disordered.

Belongs to the ripply family. In terms of tissue distribution, expressed in the anterior presomitic mesoderm and somites of stage E9.5 dpc embryos. Also expressed in tongue, diaphragm and intercostal muscles at 16.5 dpc.

Its subcellular location is the nucleus. Its function is as follows. Plays a role in somitogenesis. Essential for transcriptional repression of the segmental patterning genes, thus terminating the segmentation program in the presomitic mesoderm, and also required for the maintenance of rostrocaudal polarity in somites. This Mus musculus (Mouse) protein is Protein ripply1.